Consider the following 379-residue polypeptide: MFLLDPFSGISGDMFLSAMIDFVDKEDFINTIKKVIDVEIEIKKVKKCHILANKVNIIPKCINCNANTYKDIKNVIKSSDIQEDIKITALEILKILAEAESKVHNVDVENVHFHEVGNYDTIADIVGAAYIINKLNLKNNCLYKPINVGNGFVRTEHGLLPVPAPATAEILKGLKIFFSDINEELTTPTGSAIIKYINPKLAKGAFIIKEVSYGAGDKDLNLLNALRVFRVEDIKREDIVLLETNVDDISAEILGYLYEVLDGKVRDLHFIPTYMKKNRPAYTIRAIVDRDIAEEVAKIIMRETGSLGVRIFDIERITADREFKTIKLFDESVRLKVGRVNDEIISQKPEFEDLKNIAKKYGIPLKDLYKLINISQIKN.

Belongs to the LarC family.

The chain is Putative nickel insertion protein from Methanocaldococcus jannaschii (strain ATCC 43067 / DSM 2661 / JAL-1 / JCM 10045 / NBRC 100440) (Methanococcus jannaschii).